The sequence spans 533 residues: Beta-1,2-xylosyltransferase RCN11 (533 aa).

Residues 1-23 are Cytoplasmic-facing; the sequence is MMPVRTYHHHHHHNNSNNHRLRR. A helical; Signal-anchor for type II membrane protein transmembrane segment spans residues 24–44; that stretch reads IIPRVLLAVFAIYAVSFAAYL. Residues 45-533 lie on the Lumenal side of the membrane; that stretch reads LRHQSPHPHP…LSNILKGFGC (489 aa). The tract at residues 51–78 is disordered; the sequence is HPHPHPAADPERDAVDAAGGGGGGGAVD. Positions 56-65 are enriched in basic and acidic residues; the sequence is PAADPERDAV. N-linked (GlcNAc...) asparagine glycans are attached at residues N307 and N313.

This sequence belongs to the glycosyltransferase 61 family. Expressed at the base of the crown roots and in the basal region of the shoot, which contains the shoot and axillary meristems.

The protein resides in the golgi apparatus membrane. It participates in glycan metabolism. Its function is as follows. Glycosyltransferase involved in the xylosylation of N-glycans. Possesses beta-1,2-xylosyltransferase activity, transferring xylose from UDP-xylose to the core beta-linked mannose of N-glycans. Beta-1,2-linked xylose residues on N-glycans are critical for seed germination and plant development and growth under conditions of abiotic stress. This Oryza sativa subsp. japonica (Rice) protein is Beta-1,2-xylosyltransferase RCN11.